A 469-amino-acid polypeptide reads, in one-letter code: Argininosuccinate lyase (469 aa).

This sequence belongs to the lyase 1 family. Argininosuccinate lyase subfamily.

It localises to the cytoplasm. It catalyses the reaction 2-(N(omega)-L-arginino)succinate = fumarate + L-arginine. The protein operates within amino-acid biosynthesis; L-arginine biosynthesis; L-arginine from L-ornithine and carbamoyl phosphate: step 3/3. The protein is Argininosuccinate lyase of Novosphingobium aromaticivorans (strain ATCC 700278 / DSM 12444 / CCUG 56034 / CIP 105152 / NBRC 16084 / F199).